Here is a 395-residue protein sequence, read N- to C-terminus: 8-amino-7-oxononanoate synthase (395 aa).

Gly108 to Phe109 lines the pyridoxal 5'-phosphate pocket. Residue His134 participates in substrate binding. Residues Ser184, Asp209 to His212, and Thr240 to Lys243 each bind pyridoxal 5'-phosphate. The residue at position 243 (Lys243) is an N6-(pyridoxal phosphate)lysine. A substrate-binding site is contributed by Thr357.

This sequence belongs to the class-II pyridoxal-phosphate-dependent aminotransferase family. BioF subfamily. In terms of assembly, homodimer. It depends on pyridoxal 5'-phosphate as a cofactor.

It carries out the reaction 6-carboxyhexanoyl-[ACP] + L-alanine + H(+) = (8S)-8-amino-7-oxononanoate + holo-[ACP] + CO2. Its pathway is cofactor biosynthesis; biotin biosynthesis. Its function is as follows. Catalyzes the decarboxylative condensation of pimeloyl-[acyl-carrier protein] and L-alanine to produce 8-amino-7-oxononanoate (AON), [acyl-carrier protein], and carbon dioxide. This is 8-amino-7-oxononanoate synthase from Fervidobacterium nodosum (strain ATCC 35602 / DSM 5306 / Rt17-B1).